Reading from the N-terminus, the 132-residue chain is Small ribosomal subunit protein uS8c (132 aa).

This sequence belongs to the universal ribosomal protein uS8 family. As to quaternary structure, part of the 30S ribosomal subunit.

It is found in the plastid. The protein localises to the chloroplast. In terms of biological role, one of the primary rRNA binding proteins, it binds directly to 16S rRNA central domain where it helps coordinate assembly of the platform of the 30S subunit. In Anthoceros angustus (Hornwort), this protein is Small ribosomal subunit protein uS8c (rps8).